The chain runs to 465 residues: Kinesin-like protein KIN-1 (465 aa).

Residues 3–334 (NVTVCARFRP…LRFGMRAKHI (332 aa)) enclose the Kinesin motor domain. 87–94 (GQTGAGKT) contacts ATP. The disordered stretch occupies residues 338 to 358 (PRASEVKSAKAQEEPSSVTKD). Over residues 341–358 (SEVKSAKAQEEPSSVTKD) the composition is skewed to basic and acidic residues. The stretch at 402–444 (VYEDIVSKTIQSLQQAVDELQQKVKKLEAENIGIQEQALRNHE) forms a coiled coil.

The protein belongs to the TRAFAC class myosin-kinesin ATPase superfamily. Kinesin family. KIN-1 subfamily. In terms of assembly, homodimer. Interacts with WIP1 and WIP2. Specifically expressed in ovules and anthers.

In terms of biological role, kinesin-like motor protein that promotes synapsis and is required for proper crossover distribution in meiosis. Plays a role in the nuclear division cycles during megagametogenesis. This is Kinesin-like protein KIN-1 from Arabidopsis thaliana (Mouse-ear cress).